The chain runs to 269 residues: Tryptophan synthase alpha chain (269 aa).

Residues E49 and D60 each act as proton acceptor in the active site.

The protein belongs to the TrpA family. As to quaternary structure, tetramer of two alpha and two beta chains.

It catalyses the reaction (1S,2R)-1-C-(indol-3-yl)glycerol 3-phosphate + L-serine = D-glyceraldehyde 3-phosphate + L-tryptophan + H2O. The protein operates within amino-acid biosynthesis; L-tryptophan biosynthesis; L-tryptophan from chorismate: step 5/5. Its function is as follows. The alpha subunit is responsible for the aldol cleavage of indoleglycerol phosphate to indole and glyceraldehyde 3-phosphate. This chain is Tryptophan synthase alpha chain, found in Paramagnetospirillum magneticum (strain ATCC 700264 / AMB-1) (Magnetospirillum magneticum).